A 326-amino-acid polypeptide reads, in one-letter code: Methionyl-tRNA formyltransferase (326 aa).

110 to 113 is a binding site for (6S)-5,6,7,8-tetrahydrofolate; that stretch reads SLLP. The segment at 307–326 is disordered; it reads VGTRFSPPEAPQREPAPGEA.

It belongs to the Fmt family.

The catalysed reaction is L-methionyl-tRNA(fMet) + (6R)-10-formyltetrahydrofolate = N-formyl-L-methionyl-tRNA(fMet) + (6S)-5,6,7,8-tetrahydrofolate + H(+). Its function is as follows. Attaches a formyl group to the free amino group of methionyl-tRNA(fMet). The formyl group appears to play a dual role in the initiator identity of N-formylmethionyl-tRNA by promoting its recognition by IF2 and preventing the misappropriation of this tRNA by the elongation apparatus. The chain is Methionyl-tRNA formyltransferase from Symbiobacterium thermophilum (strain DSM 24528 / JCM 14929 / IAM 14863 / T).